Reading from the N-terminus, the 90-residue chain is Probable Fe(2+)-trafficking protein (90 aa).

It belongs to the Fe(2+)-trafficking protein family.

Could be a mediator in iron transactions between iron acquisition and iron-requiring processes, such as synthesis and/or repair of Fe-S clusters in biosynthetic enzymes. This Laribacter hongkongensis (strain HLHK9) protein is Probable Fe(2+)-trafficking protein.